The chain runs to 93 residues: Acylphosphatase (93 aa).

Residues 6–93 (RAHVFISGRV…GEERGFSIIW (88 aa)) enclose the Acylphosphatase-like domain. Active-site residues include Arg-21 and Asn-39.

The protein belongs to the acylphosphatase family.

It catalyses the reaction an acyl phosphate + H2O = a carboxylate + phosphate + H(+). This Roseiflexus sp. (strain RS-1) protein is Acylphosphatase (acyP).